The sequence spans 510 residues: NAD(P)H-quinone oxidoreductase subunit 2 B, chloroplastic (510 aa).

Transmembrane regions (helical) follow at residues 24 to 44 (LLLF…GLIL), 57 to 77 (IPWL…ALLF), 99 to 119 (IFQF…VEYI), 124 to 144 (MAIA…MFLC), 149 to 169 (LITI…LSGY), 183 to 203 (YLLM…WLYG), 227 to 247 (PGIS…LSPA), 295 to 315 (WHLL…LIAI), 323 to 343 (MLAY…IVGD), 354 to 374 (YMLF…LFGL), 395 to 415 (ALSL…AGFF), 418 to 438 (LHLF…IGLL), and 484 to 504 (MIVC…IIAI).

Belongs to the complex I subunit 2 family. NDH is composed of at least 16 different subunits, 5 of which are encoded in the nucleus.

Its subcellular location is the plastid. It localises to the chloroplast thylakoid membrane. The enzyme catalyses a plastoquinone + NADH + (n+1) H(+)(in) = a plastoquinol + NAD(+) + n H(+)(out). The catalysed reaction is a plastoquinone + NADPH + (n+1) H(+)(in) = a plastoquinol + NADP(+) + n H(+)(out). NDH shuttles electrons from NAD(P)H:plastoquinone, via FMN and iron-sulfur (Fe-S) centers, to quinones in the photosynthetic chain and possibly in a chloroplast respiratory chain. The immediate electron acceptor for the enzyme in this species is believed to be plastoquinone. Couples the redox reaction to proton translocation, and thus conserves the redox energy in a proton gradient. The chain is NAD(P)H-quinone oxidoreductase subunit 2 B, chloroplastic from Gossypium hirsutum (Upland cotton).